Here is a 240-residue protein sequence, read N- to C-terminus: 1-(5-phosphoribosyl)-5-[(5-phosphoribosylamino)methylideneamino] imidazole-4-carboxamide isomerase (240 aa).

D10 (proton acceptor) is an active-site residue. Residue D131 is the Proton donor of the active site.

It belongs to the HisA/HisF family.

Its subcellular location is the cytoplasm. It catalyses the reaction 1-(5-phospho-beta-D-ribosyl)-5-[(5-phospho-beta-D-ribosylamino)methylideneamino]imidazole-4-carboxamide = 5-[(5-phospho-1-deoxy-D-ribulos-1-ylimino)methylamino]-1-(5-phospho-beta-D-ribosyl)imidazole-4-carboxamide. It participates in amino-acid biosynthesis; L-histidine biosynthesis; L-histidine from 5-phospho-alpha-D-ribose 1-diphosphate: step 4/9. The sequence is that of 1-(5-phosphoribosyl)-5-[(5-phosphoribosylamino)methylideneamino] imidazole-4-carboxamide isomerase from Shouchella clausii (strain KSM-K16) (Alkalihalobacillus clausii).